We begin with the raw amino-acid sequence, 466 residues long: Histidine--tRNA ligase (466 aa).

It belongs to the class-II aminoacyl-tRNA synthetase family. Homodimer.

The protein resides in the cytoplasm. It carries out the reaction tRNA(His) + L-histidine + ATP = L-histidyl-tRNA(His) + AMP + diphosphate + H(+). The chain is Histidine--tRNA ligase from Bifidobacterium animalis subsp. lactis (strain AD011).